A 299-amino-acid chain; its full sequence is UDP-3-O-acyl-N-acetylglucosamine deacetylase (299 aa).

The Zn(2+) site is built by His-75, His-232, and Asp-236. His-259 acts as the Proton donor in catalysis.

It belongs to the LpxC family. Zn(2+) serves as cofactor.

The enzyme catalyses a UDP-3-O-[(3R)-3-hydroxyacyl]-N-acetyl-alpha-D-glucosamine + H2O = a UDP-3-O-[(3R)-3-hydroxyacyl]-alpha-D-glucosamine + acetate. It participates in glycolipid biosynthesis; lipid IV(A) biosynthesis; lipid IV(A) from (3R)-3-hydroxytetradecanoyl-[acyl-carrier-protein] and UDP-N-acetyl-alpha-D-glucosamine: step 2/6. In terms of biological role, catalyzes the hydrolysis of UDP-3-O-myristoyl-N-acetylglucosamine to form UDP-3-O-myristoylglucosamine and acetate, the committed step in lipid A biosynthesis. This is UDP-3-O-acyl-N-acetylglucosamine deacetylase from Helicobacter hepaticus (strain ATCC 51449 / 3B1).